A 227-amino-acid polypeptide reads, in one-letter code: Dephospho-CoA kinase (227 aa).

A DPCK domain is found at 31–227; that stretch reads KIGLTGGIGS…EKLFQFINCL (197 aa). Residue 39–44 participates in ATP binding; the sequence is GSGKST.

The protein belongs to the CoaE family.

It localises to the cytoplasm. The enzyme catalyses 3'-dephospho-CoA + ATP = ADP + CoA + H(+). Its pathway is cofactor biosynthesis; coenzyme A biosynthesis; CoA from (R)-pantothenate: step 5/5. Functionally, catalyzes the phosphorylation of the 3'-hydroxyl group of dephosphocoenzyme A to form coenzyme A. The sequence is that of Dephospho-CoA kinase from Clostridium tetani (strain Massachusetts / E88).